A 297-amino-acid polypeptide reads, in one-letter code: Homoserine kinase (297 aa).

An ATP-binding site is contributed by Pro85–Ala95.

This sequence belongs to the GHMP kinase family. Homoserine kinase subfamily.

It localises to the cytoplasm. The enzyme catalyses L-homoserine + ATP = O-phospho-L-homoserine + ADP + H(+). It participates in amino-acid biosynthesis; L-threonine biosynthesis; L-threonine from L-aspartate: step 4/5. Functionally, catalyzes the ATP-dependent phosphorylation of L-homoserine to L-homoserine phosphate. The chain is Homoserine kinase from Desulfitobacterium hafniense (strain DSM 10664 / DCB-2).